The chain runs to 143 residues: Large ribosomal subunit protein uL11 (143 aa).

This sequence belongs to the universal ribosomal protein uL11 family. In terms of assembly, part of the ribosomal stalk of the 50S ribosomal subunit. Interacts with L10 and the large rRNA to form the base of the stalk. L10 forms an elongated spine to which L12 dimers bind in a sequential fashion forming a multimeric L10(L12)X complex. One or more lysine residues are methylated.

Forms part of the ribosomal stalk which helps the ribosome interact with GTP-bound translation factors. This Psychrobacter sp. (strain PRwf-1) protein is Large ribosomal subunit protein uL11.